A 134-amino-acid chain; its full sequence is Small ribosomal subunit protein uS11 (134 aa).

This sequence belongs to the universal ribosomal protein uS11 family. As to quaternary structure, part of the 30S ribosomal subunit. Interacts with proteins S7 and S18. Binds to IF-3.

Functionally, located on the platform of the 30S subunit, it bridges several disparate RNA helices of the 16S rRNA. Forms part of the Shine-Dalgarno cleft in the 70S ribosome. This is Small ribosomal subunit protein uS11 from Frankia alni (strain DSM 45986 / CECT 9034 / ACN14a).